A 137-amino-acid polypeptide reads, in one-letter code: Translation initiation factor 2 subunit beta (137 aa).

The protein belongs to the eIF-2-beta/eIF-5 family. Heterotrimer composed of an alpha, a beta and a gamma chain.

EIF-2 functions in the early steps of protein synthesis by forming a ternary complex with GTP and initiator tRNA. This is Translation initiation factor 2 subunit beta (eif2b) from Archaeoglobus fulgidus (strain ATCC 49558 / DSM 4304 / JCM 9628 / NBRC 100126 / VC-16).